Reading from the N-terminus, the 240-residue chain is MLTRKQQELLLFIHERMKESGVPPSFDEMKDALDLASKSGIHRLITALEERGFIRRLPNRARALEVIKLPEAYTPGARPQRGFSPSVIEGSLGKPKEPEPAPAVKAPANDFAGAATIPVMGRIAAGVPISAIQNNTHDLAVPVDMLGSGEHYALEVKGDSMIEAGIFDGDTVIIRNGNTANPGDIVVALVDDEEATLKRFRRKGASIALEAANPAYETRIFGPDRVKIQGKLVGLIRRYH.

Positions 26 to 46 (FDEMKDALDLASKSGIHRLIT) form a DNA-binding region, H-T-H motif. Catalysis depends on for autocatalytic cleavage activity residues S160 and K198.

This sequence belongs to the peptidase S24 family. Homodimer.

The enzyme catalyses Hydrolysis of Ala-|-Gly bond in repressor LexA.. Functionally, represses a number of genes involved in the response to DNA damage (SOS response), including recA and lexA. In the presence of single-stranded DNA, RecA interacts with LexA causing an autocatalytic cleavage which disrupts the DNA-binding part of LexA, leading to derepression of the SOS regulon and eventually DNA repair. The polypeptide is LexA repressor (Agrobacterium fabrum (strain C58 / ATCC 33970) (Agrobacterium tumefaciens (strain C58))).